The sequence spans 485 residues: Probable coniferyl aldehyde dehydrogenase (485 aa).

Active-site residues include glutamate 226 and cysteine 260.

It belongs to the aldehyde dehydrogenase family.

The catalysed reaction is (E)-coniferaldehyde + NADP(+) + H2O = (E)-ferulate + NADPH + 2 H(+). It carries out the reaction (E)-coniferaldehyde + NAD(+) + H2O = (E)-ferulate + NADH + 2 H(+). This Caulobacter vibrioides (strain ATCC 19089 / CIP 103742 / CB 15) (Caulobacter crescentus) protein is Probable coniferyl aldehyde dehydrogenase (calB).